A 525-amino-acid chain; its full sequence is Nucleolar complex protein 4 homolog B (525 aa).

The span at 1–10 shows a compositional bias: basic residues; that stretch reads MAARKAKHAF. A disordered region spans residues 1–21; that stretch reads MAARKAKHAFRSQATQSDAER. 3 helical membrane-spanning segments follow: residues 307-327, 358-378, and 386-406; these read AAYD…FILI, FFHL…LVAA, and LALT…CNLI.

The protein belongs to the CBF/MAK21 family.

It is found in the nucleus membrane. Its subcellular location is the nucleus. The protein resides in the nucleolus. This Xenopus laevis (African clawed frog) protein is Nucleolar complex protein 4 homolog B (noc4l-b).